A 7260-amino-acid chain; its full sequence is Nonribosomal peptide synthetase ecdA (7260 aa).

The Carrier 1 domain maps to threonine 4–glutamine 80. At serine 41 the chain carries O-(pantetheine 4'-phosphoryl)serine. Residues glutamate 134–alanine 549 are condensation 1. Residues glutamine 575 to cysteine 965 form an adenylation 1 region. The Carrier 2 domain occupies alanine 1090–asparagine 1166. Serine 1127 carries the O-(pantetheine 4'-phosphoryl)serine modification. The tract at residues glutamate 1208 to aspartate 1628 is condensation 2. The interval glutamate 1653–arginine 2054 is adenylation 2. The Carrier 3 domain maps to threonine 2188–phenylalanine 2264. Serine 2225 carries the O-(pantetheine 4'-phosphoryl)serine modification. Residues glutamine 2314–proline 2719 form a condensation 3 region. Residues lysine 2763 to arginine 3156 are adenylation 3. The region spanning glutamine 3287 to valine 3365 is the Carrier 4 domain. At serine 3324 the chain carries O-(pantetheine 4'-phosphoryl)serine. Residues valine 3417–isoleucine 3831 are condensation 4. An adenylation 4 region spans residues glutamate 3851–threonine 4248. The Carrier 5 domain maps to alanine 4394–alanine 4471. The residue at position 4431 (serine 4431) is an O-(pantetheine 4'-phosphoryl)serine. The interval glutamate 4510–phenylalanine 4910 is condensation 5. The segment at glutamate 4955–arginine 5357 is adenylation 5. One can recognise a Carrier 6 domain in the interval alanine 5496 to glycine 5573. The residue at position 5533 (serine 5533) is an O-(pantetheine 4'-phosphoryl)serine. Positions glutamate 5622 to isoleucine 6043 are condensation 6. An adenylation 6 region spans residues glutamine 6063 to arginine 6460. The region spanning alanine 6592–valine 6668 is the Carrier 7 domain. Serine 6629 carries the O-(pantetheine 4'-phosphoryl)serine modification. The condensation 7 stretch occupies residues leucine 6718 to serine 7133. A disordered region spans residues cysteine 7241–isoleucine 7260.

The protein belongs to the NRP synthetase family.

It participates in antifungal biosynthesis. In terms of biological role, nonribosomal peptide synthetase; part of the gene cluster that mediates the biosynthesis of echinocandin B, a fungal lipidated cyclic hexapeptide that acts as an antifungal agent. Linoleoyl-AMP, produced by the fatty-acyl-AMP ligase ecdI, is transferred to the initiation carrier domain (T0) of ecdA. The linoleoyl-S-phosphopantetheinyl-T0 is sequentially extended with L-ornithine, L-threonine, L-proline, L-homotyrosine, L-threonine, and 4R-methyl-L-proline to form the linear hexapeptide. Thereafter, the terminal condensation (C7) performs macrocyclization of the NRPS product and the cyclic scaffold is released from ecdA. All six of the amino acid residues are hydroxylated, including 4R,5R-dihydroxy-L-ornithine, 4R-hydroxyl-L-proline, 3S,4S-dihydroxy-L-homotyrosine, and 3S-hydroxyl-4S-methyl-L-prolin. In the pathway, all the hydroxylation reactions are proposed to occur following completion of the cyclic peptide, so the unhydroxylated precursor produced by ecdA will undergo six rounds of hydroxylation. Five hydroxylase genes (ecdG, ecdH, ecdK, htyE and htyF) are embedded within the echinocandin B (ecd) and L-homotyrosine (hty) clusters. The sequence is that of Nonribosomal peptide synthetase ecdA from Aspergillus rugulosus (Emericella rugulosa).